Here is a 214-residue protein sequence, read N- to C-terminus: Probable transaldolase (214 aa).

Lys-83 (schiff-base intermediate with substrate) is an active-site residue.

The protein belongs to the transaldolase family. Type 3B subfamily.

Its subcellular location is the cytoplasm. The enzyme catalyses D-sedoheptulose 7-phosphate + D-glyceraldehyde 3-phosphate = D-erythrose 4-phosphate + beta-D-fructose 6-phosphate. The protein operates within carbohydrate degradation; pentose phosphate pathway; D-glyceraldehyde 3-phosphate and beta-D-fructose 6-phosphate from D-ribose 5-phosphate and D-xylulose 5-phosphate (non-oxidative stage): step 2/3. In terms of biological role, transaldolase is important for the balance of metabolites in the pentose-phosphate pathway. The sequence is that of Probable transaldolase from Desulfatibacillum aliphaticivorans.